The chain runs to 227 residues: Cytochrome c oxidase subunit 2 (227 aa).

Topologically, residues 1 to 26 (MSTWKNLFLQDSASPLMELLMCFHDH) are mitochondrial intermembrane. Residues 27 to 48 (AMLILILITIMVSQMLLSMLFN) form a helical membrane-spanning segment. Residues 49–62 (KLSHRYLLEGQLIE) are Mitochondrial matrix-facing. Residues 63 to 82 (TIWTIIPAIILILIALPSLR) form a helical membrane-spanning segment. At 83-227 (LLYILDEINN…LFLNWVISKA (145 aa)) the chain is on the mitochondrial intermembrane side. Cu cation contacts are provided by H161, C196, E198, C200, H204, and M207. Residue E198 coordinates Mg(2+).

Belongs to the cytochrome c oxidase subunit 2 family. As to quaternary structure, component of the cytochrome c oxidase (complex IV, CIV), a multisubunit enzyme composed of a catalytic core of 3 subunits and several supernumerary subunits. The complex exists as a monomer or a dimer and forms supercomplexes (SCs) in the inner mitochondrial membrane with ubiquinol-cytochrome c oxidoreductase (cytochrome b-c1 complex, complex III, CIII). The cofactor is Cu cation.

It localises to the mitochondrion inner membrane. It carries out the reaction 4 Fe(II)-[cytochrome c] + O2 + 8 H(+)(in) = 4 Fe(III)-[cytochrome c] + 2 H2O + 4 H(+)(out). Component of the cytochrome c oxidase, the last enzyme in the mitochondrial electron transport chain which drives oxidative phosphorylation. The respiratory chain contains 3 multisubunit complexes succinate dehydrogenase (complex II, CII), ubiquinol-cytochrome c oxidoreductase (cytochrome b-c1 complex, complex III, CIII) and cytochrome c oxidase (complex IV, CIV), that cooperate to transfer electrons derived from NADH and succinate to molecular oxygen, creating an electrochemical gradient over the inner membrane that drives transmembrane transport and the ATP synthase. Cytochrome c oxidase is the component of the respiratory chain that catalyzes the reduction of oxygen to water. Electrons originating from reduced cytochrome c in the intermembrane space (IMS) are transferred via the dinuclear copper A center (CU(A)) of subunit 2 and heme A of subunit 1 to the active site in subunit 1, a binuclear center (BNC) formed by heme A3 and copper B (CU(B)). The BNC reduces molecular oxygen to 2 water molecules using 4 electrons from cytochrome c in the IMS and 4 protons from the mitochondrial matrix. The chain is Cytochrome c oxidase subunit 2 (COII) from Sitophilus granarius (Granary weevil).